A 389-amino-acid polypeptide reads, in one-letter code: tRNA-specific 2-thiouridylase MnmA (389 aa).

Residues 35-42 (GMSGGVDS) and M61 contribute to the ATP site. The segment at 121 to 123 (NPD) is interaction with target base in tRNA. C126 serves as the catalytic Nucleophile. The cysteines at positions 126 and 223 are disulfide-linked. An ATP-binding site is contributed by G151. The tract at residues 173-175 (KDQ) is interaction with tRNA. Residue C223 is the Cysteine persulfide intermediate of the active site. Residues 335-336 (RY) are interaction with tRNA.

Belongs to the MnmA/TRMU family.

The protein localises to the cytoplasm. The enzyme catalyses S-sulfanyl-L-cysteinyl-[protein] + uridine(34) in tRNA + AH2 + ATP = 2-thiouridine(34) in tRNA + L-cysteinyl-[protein] + A + AMP + diphosphate + H(+). In terms of biological role, catalyzes the 2-thiolation of uridine at the wobble position (U34) of tRNA, leading to the formation of s(2)U34. The protein is tRNA-specific 2-thiouridylase MnmA of Mannheimia succiniciproducens (strain KCTC 0769BP / MBEL55E).